The chain runs to 211 residues: Uridine kinase (211 aa).

Residue 12-19 (GGSGSGKT) coordinates ATP.

Belongs to the uridine kinase family.

Its subcellular location is the cytoplasm. The catalysed reaction is uridine + ATP = UMP + ADP + H(+). It carries out the reaction cytidine + ATP = CMP + ADP + H(+). Its pathway is pyrimidine metabolism; CTP biosynthesis via salvage pathway; CTP from cytidine: step 1/3. The protein operates within pyrimidine metabolism; UMP biosynthesis via salvage pathway; UMP from uridine: step 1/1. In Bacillus subtilis (strain 168), this protein is Uridine kinase (udk).